The sequence spans 313 residues: Porphobilinogen deaminase (313 aa).

Position 241 is an S-(dipyrrolylmethanemethyl)cysteine (Cys241).

It belongs to the HMBS family. In terms of assembly, monomer. Dipyrromethane serves as cofactor.

The enzyme catalyses 4 porphobilinogen + H2O = hydroxymethylbilane + 4 NH4(+). It functions in the pathway porphyrin-containing compound metabolism; protoporphyrin-IX biosynthesis; coproporphyrinogen-III from 5-aminolevulinate: step 2/4. Its function is as follows. Tetrapolymerization of the monopyrrole PBG into the hydroxymethylbilane pre-uroporphyrinogen in several discrete steps. The polypeptide is Porphobilinogen deaminase (Sulfurimonas denitrificans (strain ATCC 33889 / DSM 1251) (Thiomicrospira denitrificans (strain ATCC 33889 / DSM 1251))).